We begin with the raw amino-acid sequence, 292 residues long: Homoserine kinase (292 aa).

81-91 contacts ATP; that stretch reads RPRSGLGSSGA.

The protein belongs to the GHMP kinase family. Homoserine kinase subfamily.

The protein localises to the cytoplasm. The catalysed reaction is L-homoserine + ATP = O-phospho-L-homoserine + ADP + H(+). It functions in the pathway amino-acid biosynthesis; L-threonine biosynthesis; L-threonine from L-aspartate: step 4/5. In terms of biological role, catalyzes the ATP-dependent phosphorylation of L-homoserine to L-homoserine phosphate. The protein is Homoserine kinase of Thermococcus gammatolerans (strain DSM 15229 / JCM 11827 / EJ3).